Reading from the N-terminus, the 89-residue chain is MSITAERKAEIIKANATKAGDTGSPEVQVAILSERINNLTGHFKTHGKDNHSRRGLLKLVSTRRSLLDYLKKNDEARYKALLEKHNIRR.

The protein belongs to the universal ribosomal protein uS15 family. As to quaternary structure, part of the 30S ribosomal subunit. Forms a bridge to the 50S subunit in the 70S ribosome, contacting the 23S rRNA.

Functionally, one of the primary rRNA binding proteins, it binds directly to 16S rRNA where it helps nucleate assembly of the platform of the 30S subunit by binding and bridging several RNA helices of the 16S rRNA. Forms an intersubunit bridge (bridge B4) with the 23S rRNA of the 50S subunit in the ribosome. The polypeptide is Small ribosomal subunit protein uS15 (Bradyrhizobium sp. (strain ORS 278)).